We begin with the raw amino-acid sequence, 315 residues long: Aspartate carbamoyltransferase catalytic subunit (315 aa).

Carbamoyl phosphate contacts are provided by Arg55 and Thr56. Lys83 serves as a coordination point for L-aspartate. Carbamoyl phosphate-binding residues include Arg105, His138, and Gln141. L-aspartate-binding residues include Arg171 and Arg225. Residues Gly266 and Pro267 each coordinate carbamoyl phosphate.

This sequence belongs to the aspartate/ornithine carbamoyltransferase superfamily. ATCase family. Heterododecamer (2C3:3R2) of six catalytic PyrB chains organized as two trimers (C3), and six regulatory PyrI chains organized as three dimers (R2).

It catalyses the reaction carbamoyl phosphate + L-aspartate = N-carbamoyl-L-aspartate + phosphate + H(+). The protein operates within pyrimidine metabolism; UMP biosynthesis via de novo pathway; (S)-dihydroorotate from bicarbonate: step 2/3. Catalyzes the condensation of carbamoyl phosphate and aspartate to form carbamoyl aspartate and inorganic phosphate, the committed step in the de novo pyrimidine nucleotide biosynthesis pathway. The polypeptide is Aspartate carbamoyltransferase catalytic subunit (Mycolicibacterium vanbaalenii (strain DSM 7251 / JCM 13017 / BCRC 16820 / KCTC 9966 / NRRL B-24157 / PYR-1) (Mycobacterium vanbaalenii)).